A 60-amino-acid polypeptide reads, in one-letter code: Cytochrome c oxidase assembly protein COX14 homolog (60 aa).

Residues 10-32 traverse the membrane as a helical segment; that stretch reads VGYRLFSGSMMLLTVYGGYLCVV.

The protein resides in the mitochondrion membrane. Its function is as follows. Plays a role in the assembly or stability of the cytochrome c oxidase complex (COX). This Danio rerio (Zebrafish) protein is Cytochrome c oxidase assembly protein COX14 homolog.